Here is a 370-residue protein sequence, read N- to C-terminus: ATP/GTP phosphatase (370 aa).

The catalysed reaction is ATP + H2O = ADP + phosphate + H(+). It carries out the reaction GTP + H2O = GDP + phosphate + H(+). In terms of biological role, has nucleotide phosphatase activity toward ATP and GTP, but not toward CTP, TTP and ADP. In Helicobacter pylori (strain ATCC 700392 / 26695) (Campylobacter pylori), this protein is ATP/GTP phosphatase.